A 176-amino-acid polypeptide reads, in one-letter code: MPLNLEDKRAIVASVNAVAAEALSAVVADYRGLTVSQMTELRSKARETGVYLKVVRNTLAKFAVKDTEFECLNDALVGPTVLAFSKDDPGAAARLIKDFAKDHDALEVKALAVGGVTYGAQDIDVLAKLPTRDEAISQLMSVMQAPVAKFVRTLNEVPGKFVRTVAAVKDQKQSAA.

This sequence belongs to the universal ribosomal protein uL10 family. In terms of assembly, part of the ribosomal stalk of the 50S ribosomal subunit. The N-terminus interacts with L11 and the large rRNA to form the base of the stalk. The C-terminus forms an elongated spine to which L12 dimers bind in a sequential fashion forming a multimeric L10(L12)X complex.

Functionally, forms part of the ribosomal stalk, playing a central role in the interaction of the ribosome with GTP-bound translation factors. The chain is Large ribosomal subunit protein uL10 from Alcanivorax borkumensis (strain ATCC 700651 / DSM 11573 / NCIMB 13689 / SK2).